Here is a 1778-residue protein sequence, read N- to C-terminus: Protein TIC 214 (1778 aa).

6 helical membrane-spanning segments follow: residues 18-38, 67-87, 90-110, 132-152, 175-195, and 226-246; these read IINSVVVVGLYYGFLTTFSIG, FIAGQLMMFISIYYAPLHLAL, PHTITVLALPYLLFHFFWNNN, VFLNNLIFQLFNHFILPSSML, VGWLIGHILFMKWVGLVLVWI, and IFSILLFITCVYYLGRIPSPI. The interval 1498–1520 is disordered; the sequence is GQGELESDNEKKRNPESALSNQE.

The protein belongs to the TIC214 family. As to quaternary structure, part of the Tic complex.

It localises to the plastid. Its subcellular location is the chloroplast inner membrane. Functionally, involved in protein precursor import into chloroplasts. May be part of an intermediate translocation complex acting as a protein-conducting channel at the inner envelope. This chain is Protein TIC 214, found in Arabis hirsuta (Hairy rock-cress).